A 322-amino-acid chain; its full sequence is Lactamase-like protein nscB (322 aa).

H97, H99, D101, and H102 together coordinate Zn(2+). D101 (proton donor/acceptor) is an active-site residue.

This sequence belongs to the metallo-beta-lactamase superfamily. Requires Zn(2+) as cofactor.

It participates in secondary metabolite biosynthesis. Lactamase-like protein; part of the gene cluster that mediates the biosynthesis of neosartoricin B, a prenylated anthracenone that probably exhibits T-cell antiproliferative activity, suggestive of a physiological role as an immunosuppressive agent. The non-reducing polyketide synthase nscA probably synthesizes and cyclizes the decaketide backbone. The hydrolase nscB then mediates the product release through hydrolysis followed by spontaneous decarboxylation. The prenyltransferase nscD catalyzes the addition of the dimethylallyl group to the aromatic C5. The FAD-dependent monooxygenase nscC is then responsible for the stereospecific hydroxylation at C2. Neosartoricin B can be converted into two additional compounds neosartoricins C and D. Neosartoricin C is a spirocyclic compound that is cyclized through the attack of C3 hydroxyl on C14, followed by dehydration. On the other hand, neosartoricin D is a further cyclized compound in which attack of C2 on C14 in neosartoricin C results in the formation of the acetal-containing dioxabicyclo-octanone ring. Both of these compounds are novel and possibly represent related metabolites of the gene cluster. This chain is Lactamase-like protein nscB, found in Trichophyton rubrum (strain ATCC MYA-4607 / CBS 118892) (Athlete's foot fungus).